The primary structure comprises 255 residues: tRNA (guanine-N(1)-)-methyltransferase (255 aa).

S-adenosyl-L-methionine contacts are provided by residues glycine 121 and 141-146; that span reads IGDYVL. The disordered stretch occupies residues 236–255; sequence PVKAPNRAGRQKTPKNKTDG. Basic residues predominate over residues 244 to 255; the sequence is GRQKTPKNKTDG.

The protein belongs to the RNA methyltransferase TrmD family. As to quaternary structure, homodimer.

It is found in the cytoplasm. The enzyme catalyses guanosine(37) in tRNA + S-adenosyl-L-methionine = N(1)-methylguanosine(37) in tRNA + S-adenosyl-L-homocysteine + H(+). In terms of biological role, specifically methylates guanosine-37 in various tRNAs. The polypeptide is tRNA (guanine-N(1)-)-methyltransferase (Bradyrhizobium diazoefficiens (strain JCM 10833 / BCRC 13528 / IAM 13628 / NBRC 14792 / USDA 110)).